We begin with the raw amino-acid sequence, 703 residues long: Serotransferrin (703 aa).

The N-terminal stretch at 1–19 is a signal peptide; the sequence is MDLSLHVALCLGMLALCLA. 2 Transferrin-like domains span residues 27–341 and 354–686; these read VRWC…ALKE and VRWC…SLNK. Intrachain disulfides connect cysteine 30–cysteine 65 and cysteine 40–cysteine 56. Fe(3+) is bound by residues aspartate 80 and tyrosine 112. 3 cysteine pairs are disulfide-bonded: cysteine 135–cysteine 218, cysteine 180–cysteine 193, and cysteine 246–cysteine 260. Residues threonine 137, lysine 141, alanine 143, and glycine 144 each contribute to the hydrogencarbonate site. Position 212 (tyrosine 212) interacts with Fe(3+). Histidine 268 lines the Fe(3+) pocket. The interval 341 to 350 is connecting region; the sequence is EGVKEDDLAA. Disulfide bonds link cysteine 357–cysteine 389 and cysteine 367–cysteine 380. Positions 404 and 443 each coordinate Fe(3+). Intrachain disulfides connect cysteine 414–cysteine 698, cysteine 432–cysteine 659, cysteine 466–cysteine 545, cysteine 490–cysteine 687, cysteine 500–cysteine 514, cysteine 511–cysteine 528, and cysteine 585–cysteine 599. Positions 468, 472, 474, and 475 each coordinate hydrogencarbonate. Tyrosine 539 contacts Fe(3+). Histidine 607 provides a ligand contact to Fe(3+).

This sequence belongs to the transferrin family. Monomer. In terms of tissue distribution, plasma.

Its subcellular location is the secreted. In terms of biological role, transferrins are iron binding transport proteins which can bind two Fe(3+) ions in association with the binding of an anion, usually bicarbonate. It is responsible for the transport of iron from sites of absorption and heme degradation to those of storage and utilization. Serum transferrin may also have a further role in stimulating cell proliferation. This Xenopus tropicalis (Western clawed frog) protein is Serotransferrin (tf).